The chain runs to 716 residues: Inhibitor of nuclear factor kappa-B kinase subunit epsilon (716 aa).

The Protein kinase domain maps to 9–315 (WHTDDLLGQG…LQRVVVHVFS (307 aa)). 15–23 (LGQGATASV) is a binding site for ATP. K30 is covalently cross-linked (Glycyl lysine isopeptide (Lys-Gly) (interchain with G-Cter in ubiquitin)). K38 is an ATP binding site. Residue D135 is the Proton acceptor of the active site. S172 bears the Phosphoserine; by autocatalysis and IKKB mark. K231 participates in a covalent cross-link: Glycyl lysine isopeptide (Lys-Gly) (interchain with G-Cter in SUMO1). An interaction with DDX3X region spans residues 383–647 (STAIPKGLAF…VQESLSKLLE (265 aa)). K401 is covalently cross-linked (Glycyl lysine isopeptide (Lys-Gly) (interchain with G-Cter in ubiquitin)). Residues 436–457 (QELMFRGLHWVMEVLQATCRRT) are leucine-zipper. T501 carries the post-translational modification Phosphothreonine. At S664 the chain carries Phosphoserine.

Belongs to the protein kinase superfamily. Ser/Thr protein kinase family. I-kappa-B kinase subfamily. As to quaternary structure, homodimer. Interacts with MAVS/IPS1. Interacts (via protein kinase domain) with TTLL12 (via N-terminus); the interaction prevents MAVS binding to IKBKE. Interacts with the adapter proteins AZI2/NAP1, TANK and TBKBP1/SINTBAD. Interacts with SIKE1. Interacts with TICAM1/TRIF, IRF3 and RIGI; interactions are disrupted by the interaction between IKBKE and SIKE1. Interacts with TOPORS; induced by DNA damage. Interacts with CYLD. Interacts (when polyubiquitinated) with IKBKB, IKBKG and MYD88. Interacts with IFIH1. Interacts with DDX3X; the interaction may be induced upon virus infection. Interacts with TRIM6 (via SPRY box). Interacts with unanchored K48-linked polyubiquitin chains; this leads to IKBKE activation. Interacts with TBK1. Interacts with FKBP5. (Microbial infection) Interacts (via Protein kinase domain) with arenavirus protein N; the interaction inhibits IKBKE kinase function. In terms of assembly, (Microbial infection) Interacts with Ebola virus protein VP35; the interaction leads to inhibition of cellular antiviral response by blocking necessary interactions between the IKBKE and MAVS/IPS as well as its substrates IRF3 and IRF7. As to quaternary structure, (Microbial infection) Interacts with Severe fever with thrombocytopenia virus (SFTSV) NSs; this interaction this interaction sequesters IKBKE in NSs-induced cytoplasmic inclusion bodies thereby inhibiting the IFN responses. (Microbial infection) Interacts with human T-cell leukemia virus 1/HTLV-1 protein HBZ. In terms of assembly, (Microbial infection) Interacts with Epstein-Barr virus (EBV) protein NEC2/BFRF1; this interaction inhibits IKBKE kinase activity and IRF3 nuclear translocation. Post-translationally, autophosphorylated and phosphorylated by IKBKB/IKKB. Phosphorylation at Ser-172 is enhanced by the interaction with DDX3X. Phosphorylated at Thr-501 upon IFN activation. Sumoylation by TOPORS upon DNA damage is required for protection of cells against DNA damage-induced cell death. Desumoylated by SENP1. In terms of processing, 'Lys-63'-linked polyubiquitinated at Lys-30 and Lys-401 by TRAF2:BIRC2 and TRAF2:BIRC3 complexes. Ubiquitination is induced by LPS, TNFA and interleukin-1 and required for full kinase activity and KF-kappa-B pathway activation. As to expression, highly expressed in spleen followed by thymus, peripheral blood leukocytes, pancreas, placenta. Weakly expressed in lung, kidney, prostate, ovary and colon.

The protein localises to the cytoplasm. It is found in the nucleus. The protein resides in the PML body. The catalysed reaction is L-seryl-[I-kappa-B protein] + ATP = O-phospho-L-seryl-[I-kappa-B protein] + ADP + H(+). Functionally, serine/threonine kinase that plays an essential role in regulating inflammatory responses to viral infection, through the activation of the type I IFN, NF-kappa-B and STAT signaling. Also involved in TNFA and inflammatory cytokines, like Interleukin-1, signaling. Following activation of viral RNA sensors, such as RIG-I-like receptors, associates with DDX3X and phosphorylates interferon regulatory factors (IRFs), IRF3 and IRF7, as well as DDX3X. This activity allows subsequent homodimerization and nuclear translocation of the IRF3 leading to transcriptional activation of pro-inflammatory and antiviral genes including IFNB. In order to establish such an antiviral state, IKBKE forms several different complexes whose composition depends on the type of cell and cellular stimuli. Thus, several scaffolding molecules including IPS1/MAVS, TANK, AZI2/NAP1 or TBKBP1/SINTBAD can be recruited to the IKBKE-containing-complexes. Activated by polyubiquitination in response to TNFA and interleukin-1, regulates the NF-kappa-B signaling pathway through, at least, the phosphorylation of CYLD. Phosphorylates inhibitors of NF-kappa-B thus leading to the dissociation of the inhibitor/NF-kappa-B complex and ultimately the degradation of the inhibitor. In addition, is also required for the induction of a subset of ISGs which displays antiviral activity, may be through the phosphorylation of STAT1 at 'Ser-708'. Phosphorylation of STAT1 at 'Ser-708' also seems to promote the assembly and DNA binding of ISGF3 (STAT1:STAT2:IRF9) complexes compared to GAF (STAT1:STAT1) complexes, in this way regulating the balance between type I and type II IFN responses. Protects cells against DNA damage-induced cell death. Also plays an important role in energy balance regulation by sustaining a state of chronic, low-grade inflammation in obesity, wich leads to a negative impact on insulin sensitivity. Phosphorylates AKT1. This is Inhibitor of nuclear factor kappa-B kinase subunit epsilon (IKBKE) from Homo sapiens (Human).